We begin with the raw amino-acid sequence, 265 residues long: uncharacterized protein (265 aa).

The stretch at 143–205 (ATQKALKDSI…EKLIKSVEKA (63 aa)) forms a coiled coil.

This is an uncharacterized protein from Aquifex aeolicus (strain VF5).